Consider the following 686-residue polypeptide: Acyl-CoA synthetase short-chain family member 3, mitochondrial (686 aa).

Residues 1-29 (MKPSWLQCRKVTSAGGLGGPLPGSSPARG) constitute a mitochondrion transit peptide. 227 to 230 (EPGR) contributes to the CoA binding site. ATP is bound by residues 425 to 427 (GER) and 446 to 451 (DHWWQT). An N6-succinyllysine modification is found at K518. N6-acetyllysine is present on K524. ATP-binding residues include D539, R554, and R565. CoA is bound at residue R624.

It belongs to the ATP-dependent AMP-binding enzyme family.

It localises to the mitochondrion matrix. The enzyme catalyses acetate + ATP + CoA = acetyl-CoA + AMP + diphosphate. It carries out the reaction propanoate + ATP + CoA = propanoyl-CoA + AMP + diphosphate. It catalyses the reaction butanoate + ATP + CoA = butanoyl-CoA + AMP + diphosphate. Its function is as follows. Catalyzes the synthesis of acetyl-CoA from short-chain fatty acids. Propionate is the preferred substrate. Can utilize acetate and butyrate with a much lower affinity. This is Acyl-CoA synthetase short-chain family member 3, mitochondrial (ACSS3) from Homo sapiens (Human).